A 483-amino-acid polypeptide reads, in one-letter code: Regulatory protein ViaA (483 aa).

It belongs to the ViaA family. As to quaternary structure, homodimer. Interacts with RavA.

It localises to the cytoplasm. Component of the RavA-ViaA chaperone complex, which may act on the membrane to optimize the function of some of the respiratory chains. ViaA stimulates the ATPase activity of RavA. This Escherichia coli O7:K1 (strain IAI39 / ExPEC) protein is Regulatory protein ViaA.